Consider the following 401-residue polypeptide: Forkhead box protein H1 (401 aa).

Residues 32 to 57 (MGPRDNSQLRPPEAESLSKTPKRRKK) form a disordered region. The fork-head DNA-binding region spans 64–163 (KPPYTYLAMI…QNTALCRRWQ (100 aa)). The tract at residues 179–251 (VLHGQPYQPP…PSSSSETPLW (73 aa)) is disordered. The span at 185–195 (YQPPSPPPPPR) shows a compositional bias: pro residues. Residues 221-230 (GQSTAAQAGT) are compositionally biased toward polar residues. The interval 307–390 (LWGQLPTSYL…VSHPRDLAAP (84 aa)) is SMAD-interaction domain (SID). Residues 311-315 (LPTSY) carry the Fast/FoxH1 motif 1 (FM1) motif. The short motif at 321–327 (PNVVMPL) is the Fast/FoxH1 motif 2 (FM2) element. The SMAD interaction motif (SIM) signature appears at 363-384 (LDSLFQGVPPNKSIYDVWVSHP).

In terms of assembly, interacts with the MH2 domains of SMAD2 and SMAD3.

It is found in the nucleus. In terms of biological role, transcriptional activator. Recognizes and binds to the DNA sequence 5'-TGT[GT][GT]ATT-3'. Required for induction of the goosecoid (GSC) promoter by TGF-beta or activin signaling. Forms a transcriptionally active complex containing FOXH1/SMAD2/SMAD4 on a site on the GSC promoter called TARE (TGF-beta/activin response element). The polypeptide is Forkhead box protein H1 (Foxh1) (Mus musculus (Mouse)).